The primary structure comprises 404 residues: Tryptophan synthase beta chain (404 aa).

Lysine 98 is subject to N6-(pyridoxal phosphate)lysine.

It belongs to the TrpB family. As to quaternary structure, tetramer of two alpha and two beta chains. Pyridoxal 5'-phosphate is required as a cofactor.

The catalysed reaction is (1S,2R)-1-C-(indol-3-yl)glycerol 3-phosphate + L-serine = D-glyceraldehyde 3-phosphate + L-tryptophan + H2O. Its pathway is amino-acid biosynthesis; L-tryptophan biosynthesis; L-tryptophan from chorismate: step 5/5. Functionally, the beta subunit is responsible for the synthesis of L-tryptophan from indole and L-serine. In Rhodopseudomonas palustris (strain BisB18), this protein is Tryptophan synthase beta chain.